Consider the following 907-residue polypeptide: Probable dipeptidyl-aminopeptidase B (907 aa).

The span at 1 to 26 (MPRQRAPKEEEAELLTKQERSTRSSE) shows a compositional bias: basic and acidic residues. The interval 1–70 (MPRQRAPKEE…EKYTDEDDEA (70 aa)) is disordered. Residues 1–93 (MPRQRAPKEE…PVAVDKKTRR (93 aa)) lie on the Cytoplasmic side of the membrane. Low complexity predominate over residues 30 to 44 (DASVSSISTTSLVLE). A helical; Signal-anchor for type II membrane protein membrane pass occupies residues 94–114 (WLWIVGIACVTGWALALVFFL). At 115–907 (MSGSYKHVST…SQVDARLERR (793 aa)) the chain is on the vacuolar side. Asn560 is a glycosylation site (N-linked (GlcNAc...) asparagine). Ser751 serves as the catalytic Charge relay system. The N-linked (GlcNAc...) asparagine glycan is linked to Asn805. Active-site charge relay system residues include Asp828 and His861.

This sequence belongs to the peptidase S9B family.

It localises to the vacuole membrane. It catalyses the reaction Release of an N-terminal dipeptide, Xaa-Yaa-|-Zaa-, from a polypeptide, preferentially when Yaa is Pro, provided Zaa is neither Pro nor hydroxyproline.. Type IV dipeptidyl-peptidase which removes N-terminal dipeptides sequentially from polypeptides having unsubstituted N-termini provided that the penultimate residue is proline. This Pyrenophora teres f. teres (strain 0-1) (Barley net blotch fungus) protein is Probable dipeptidyl-aminopeptidase B (dapB).